A 247-amino-acid polypeptide reads, in one-letter code: Enolase-phosphatase E1 (247 aa).

The protein belongs to the HAD-like hydrolase superfamily. MasA/MtnC family. In terms of assembly, monomer. Mg(2+) is required as a cofactor.

It carries out the reaction 5-methylsulfanyl-2,3-dioxopentyl phosphate + H2O = 1,2-dihydroxy-5-(methylsulfanyl)pent-1-en-3-one + phosphate. Its pathway is amino-acid biosynthesis; L-methionine biosynthesis via salvage pathway; L-methionine from S-methyl-5-thio-alpha-D-ribose 1-phosphate: step 3/6. It functions in the pathway amino-acid biosynthesis; L-methionine biosynthesis via salvage pathway; L-methionine from S-methyl-5-thio-alpha-D-ribose 1-phosphate: step 4/6. In terms of biological role, bifunctional enzyme that catalyzes the enolization of 2,3-diketo-5-methylthiopentyl-1-phosphate (DK-MTP-1-P) into the intermediate 2-hydroxy-3-keto-5-methylthiopentenyl-1-phosphate (HK-MTPenyl-1-P), which is then dephosphorylated to form the acireductone 1,2-dihydroxy-3-keto-5-methylthiopentene (DHK-MTPene). In Leptospira biflexa serovar Patoc (strain Patoc 1 / Ames), this protein is Enolase-phosphatase E1.